The sequence spans 21 residues: Peptide PGLa-R2 (21 aa).

Leu-21 carries the post-translational modification Leucine amide.

Expressed by the skin glands.

Its subcellular location is the secreted. Its function is as follows. Antimicrobial peptide. The polypeptide is Peptide PGLa-R2 (Xenopus ruwenzoriensis (Uganda clawed frog)).